Consider the following 59-residue polypeptide: Temporin-HN2 (59 aa).

A signal peptide spans 1–22 (MFTLKKSLLLLLFLGTINLSLS). Residues 16–44 (TINLSLSEQERDAKEERRDEMDVEVEKRN) are a coiled coil. Positions 23–41 (EQERDAKEERRDEMDVEVE) are excised as a propeptide. The residue at position 57 (leucine 57) is a Leucine amide.

As to expression, expressed by the skin glands.

The protein localises to the secreted. Functionally, has antimicrobial activity against some Gram-positive bacteria and fungi but has no activity against a range of Gram-negative bacteria except P.faecalis. Active against the Gram-positive bacteria S.aureus ATCC 25923 (MIC=4.8 uM), S.carnosus KHS (MIC=19 uM), B.licheniformis X39 (MIC=19 uM) and R.rhodochrous X15 (MIC=2.4 uM) but is inactive against E.faecium 091299 and E.faecalis 981. Has a less potent antimicrobial activity against the Gram-negative bacterium P.faecalis X29 (MIC=37.5 uM) and is inactive against E.coli, P.aeruginosa and S.typhi. Has antifungal activity against C.albicans ATCC 2002 (MIC=9.5 uM) and is also active against the slime mold 090223 (MIC=9.5 uM). Has extremely low hemolytic activity against human erythrocytes (LC(50)=300 uM). The chain is Temporin-HN2 from Odorrana hainanensis (Odor frog).